Here is a 263-residue protein sequence, read N- to C-terminus: 2-dehydro-3-deoxyphosphooctonate aldolase (263 aa).

Belongs to the KdsA family.

The protein localises to the cytoplasm. The enzyme catalyses D-arabinose 5-phosphate + phosphoenolpyruvate + H2O = 3-deoxy-alpha-D-manno-2-octulosonate-8-phosphate + phosphate. Its pathway is carbohydrate biosynthesis; 3-deoxy-D-manno-octulosonate biosynthesis; 3-deoxy-D-manno-octulosonate from D-ribulose 5-phosphate: step 2/3. It functions in the pathway bacterial outer membrane biogenesis; lipopolysaccharide biosynthesis. The polypeptide is 2-dehydro-3-deoxyphosphooctonate aldolase (Wolinella succinogenes (strain ATCC 29543 / DSM 1740 / CCUG 13145 / JCM 31913 / LMG 7466 / NCTC 11488 / FDC 602W) (Vibrio succinogenes)).